Reading from the N-terminus, the 1297-residue chain is Protein ENHANCED DOWNY MILDEW 2 (1297 aa).

The segment at 222 to 281 adopts a PHD-type 1; degenerate zinc-finger fold; sequence ESVCAICDNGGEILCCEGSCLRSFHATKKDGEDSLCDSLGFNKMQVEAIQKYFCPNCEHK. Residues C237, C241, C275, C278, C285, C288, C306, C311, H316, C319, C346, and H349 each coordinate Zn(2+). The PHD-type 2; atypical zinc-finger motif lies at 282–352; the sequence is IHQCFICKNL…EYTCPLHKCS (71 aa). The PHD-type 3; degenerate zinc-finger motif lies at 351 to 417; it reads CSVCENGEVK…RVLIYCQEHE (67 aa). Residues 445 to 452 carry the Nuclear localization signal 1 motif; it reads QRRILESH. Disordered regions lie at residues 471-547 and 562-598; these read CGKA…ARDA and TQEP…IPTL. The span at 475–487 shows a compositional bias: low complexity; the sequence is SKNSFRSSFPSSK. Residues 492-499 carry the Nuclear localization signal 2 motif; that stretch reads TKKHGLVS. Residues 526–547 are compositionally biased toward basic and acidic residues; the sequence is KMMEDSREAGKNKLGVKEARDA. 2 consecutive short sequence motifs (nuclear localization signal) follow at residues 610 to 617 and 979 to 986; these read MKKATEEI and LKKEGKTK. Composition is skewed to basic and acidic residues over residues 969-990 and 1096-1109; these read QSDH…DYSG and EVSR…RTSR. Disordered stretches follow at residues 969–1017, 1085–1109, and 1260–1297; these read QSDH…GELS, HGCK…RTSR, and FPLP…WIND.

In terms of assembly, interacts with WNK8 in nucleus; this interaction is involved in developmental processes regulation but not in RPP7-dependent disease resistance. Interacts with EML1 and EML2 in nucleus. Component of the ASI1-AIPP1-EDM2 (AAE) RNA regulatory complex composed of at least AIPP1/EDM3, ASI1 and EDM2 and may contain CPL2, AIPP2 and AIPP3/BDT1. Binds directly to AIPP1/EDM3. Co-associates with AIPP1/EDM3 to histone H3 lysine 9 dimethylation (H3K9me2)-marked chromatin and transcripts at a critical proximal polyadenylation site of RPP7 to hamper proximal transcript polyadeylation/termination. Post-translationally, phosphorylated by WNK8.

The protein localises to the nucleus. Its function is as follows. Cellular antisilencing factor and regulator of genome DNA methylation patterns involved in the regulation of chromatin states. Together with SUVH4, monitors repressive epigenetic marks H3K27me1, H3K9me2, and prevents DNA-methylation at CHG sites, affecting especially the expression of transposons and developmentally important genes. Collaboratively with ASI1 and AIPP1/EDM3, the AAE complex regulates alternative RNA processing (e.g. alternative splicing) and epigenetic silencing (e.g. H3K9me2) of intronic heterochromatin-containing genes as well as genic heterochromatin-containing genes by promoting distal 3' polyadenylation. Epigenetic reader that binds DNA and contributes to transcriptional transposable element (TE) silencing by modulating levels of the repressive post-translational histone modifications (PHM) H3K9me2. In cv. Columbia, required for RPP7-dependent disease resistance against the Hyaloperonospora arabidopsidis isolate Hiks1, by promoting levels of RPP7 via alternative polyadenylation (APA), resulting from cooption of epigenetic information at the TE insertion locus COPIA-R7. Exhibits a global role in NLR (nucleotide-binding, leucine-rich repeat) defense genes epigenetic (e.g. H3K9me2 hallmarks) expression control; promotes the accumulation of RPP7, RPP4 and some other proteins, but mediates the repression of several other NLR products, probably to compensate for fitness penalties caused by defense mechanisms. Regulates development processes such as the formation of leaf pavement cells, leaf expansion, fertility and flowering. Prevents FLC accumulation to control flowering. Modulates stomatal development by regulating the methylation-mediated silencing of ERECTA receptor genes (e.g. ER, ERL1 and ERL2) and preventing cell divisions. This Arabidopsis thaliana (Mouse-ear cress) protein is Protein ENHANCED DOWNY MILDEW 2.